The chain runs to 167 residues: cAMP-dependent protein kinase type I-alpha regulatory subunit (167 aa).

Thr-12 is modified (phosphothreonine). A phosphoserine mark is found at Ser-14 and Ser-20. Positions 30-33 (RGAI) match the Pseudophosphorylation motif motif. The residue at position 34 (Ser-34) is a Phosphoserine. Residues 51–78 (LFSHLDDNERILMGSTLRMYEEFLSKVS), 79–167 (ILES…ILKR), Glu-147, and Arg-156 each bind 3',5'-cyclic AMP. Position 82 is a phosphoserine (Ser-82).

The protein belongs to the cAMP-dependent kinase regulatory chain family. As to quaternary structure, the inactive holoenzyme is composed of two regulatory chains and two catalytic chains. Activation by cAMP releases the two active catalytic monomers and the regulatory dimer. Interacts with PRKACA and PRKACB. PRKAR1A also interacts with RFC2; the complex may be involved in cell survival. Interacts with AKAP4. Interacts with RARA; the interaction occurs in the presence of cAMP or FSH and regulates RARA transcriptional activity. Interacts with the phosphorylated form of PJA2. Interacts with CBFA2T3. Interacts with PRKX; regulates this cAMP-dependent protein kinase. Interacts with smAKAP; this interaction may target PRKAR1A to the plasma membrane. Interacts with AICDA. The pseudophosphorylation site binds to the substrate-binding region of the catalytic chain, resulting in the inhibition of its activity.

Its subcellular location is the cell membrane. Its function is as follows. Regulatory subunit of the cAMP-dependent protein kinases involved in cAMP signaling in cells. This Mesocricetus auratus (Golden hamster) protein is cAMP-dependent protein kinase type I-alpha regulatory subunit.